Consider the following 66-residue polypeptide: Large ribosomal subunit protein bL33c (66 aa).

It belongs to the bacterial ribosomal protein bL33 family.

Its subcellular location is the plastid. It is found in the chloroplast. The chain is Large ribosomal subunit protein bL33c from Nasturtium officinale (Watercress).